Here is a 150-residue protein sequence, read N- to C-terminus: Ribonuclease HI (150 aa).

The 142-residue stretch at 1-142 (MSDSVELFTD…ADQLANRGVD (142 aa)) folds into the RNase H type-1 domain. Residues aspartate 10, glutamate 48, aspartate 70, and aspartate 134 each contribute to the Mg(2+) site.

The protein belongs to the RNase H family. Monomer. Mg(2+) serves as cofactor.

The protein resides in the cytoplasm. It carries out the reaction Endonucleolytic cleavage to 5'-phosphomonoester.. Functionally, endonuclease that specifically degrades the RNA of RNA-DNA hybrids. This Pseudomonas syringae pv. tomato (strain ATCC BAA-871 / DC3000) protein is Ribonuclease HI.